Reading from the N-terminus, the 533-residue chain is Flavin-containing monooxygenase 5 (533 aa).

At Arg-5 the chain carries Dimethylated arginine. Residues Gly-10–Ser-14, Glu-33, and Leu-41–Trp-42 each bind FAD. At Ser-54 the chain carries Phosphoserine. Residue Tyr-56 is modified to Phosphotyrosine. At Ser-58 the chain carries Phosphoserine. An FAD-binding site is contributed by Asn-62 to Thr-63. Ser-196 to Asp-199 contributes to the NADP(+) binding site. Residue Ser-280 is modified to Phosphoserine. Thr-284 bears the Phosphothreonine mark. Residue Ser-401 is modified to Phosphoserine. Residues Met-513 to Phe-533 form a helical membrane-spanning segment.

The protein belongs to the FMO family. FAD is required as a cofactor. In terms of tissue distribution, kidney and liver.

It localises to the microsome membrane. The protein localises to the endoplasmic reticulum membrane. It catalyses the reaction N,N-dimethylaniline + NADPH + O2 + H(+) = N,N-dimethylaniline N-oxide + NADP(+) + H2O. The enzyme catalyses NADPH + O2 + H(+) = H2O2 + NADP(+). It carries out the reaction heptan-2-one + NADPH + O2 + H(+) = pentyl acetate + NADP(+) + H2O. The catalysed reaction is octan-3-one + NADPH + O2 + H(+) = pentyl propanoate + NADP(+) + H2O. It catalyses the reaction octan-3-one + NADPH + O2 + H(+) = ethyl hexanoate + NADP(+) + H2O. The enzyme catalyses hexan-3-one + NADPH + O2 + H(+) = ethyl butanoate + NADP(+) + H2O. It carries out the reaction hexan-3-one + NADPH + O2 + H(+) = propyl propanoate + NADP(+) + H2O. The catalysed reaction is heptan-4-one + NADPH + O2 + H(+) = propyl butanoate + NADP(+) + H2O. It catalyses the reaction (2E)-geranial + NADPH + O2 + H(+) = (1E)-2,6-dimethylhepta-1,5-dien-1-yl formate + NADP(+) + H2O. The enzyme catalyses sulcatone + NADPH + O2 + H(+) = 4-methylpent-3-en-1-yl acetate + NADP(+) + H2O. In terms of biological role, acts as a Baeyer-Villiger monooxygenase on a broad range of substrates. Catalyzes the insertion of an oxygen atom into a carbon-carbon bond adjacent to a carbonyl, which converts ketones to esters. Active on diverse carbonyl compounds, whereas soft nucleophiles are mostly non- or poorly reactive. In contrast with other forms of FMO it is non- or poorly active on 'classical' substrates such as drugs, pesticides, and dietary components containing soft nucleophilic heteroatoms. Able to oxidize drug molecules bearing a carbonyl group on an aliphatic chain, such as nabumetone and pentoxifylline. Also, in the absence of substrates, shows slow but yet significant NADPH oxidase activity. Acts as a positive modulator of cholesterol biosynthesis as well as glucose homeostasis, promoting metabolic aging via pleiotropic effects. The sequence is that of Flavin-containing monooxygenase 5 (FMO5) from Oryctolagus cuniculus (Rabbit).